A 172-amino-acid polypeptide reads, in one-letter code: Urease accessory protein UreE (172 aa).

This sequence belongs to the UreE family.

The protein resides in the cytoplasm. Involved in urease metallocenter assembly. Binds nickel. Probably functions as a nickel donor during metallocenter assembly. This chain is Urease accessory protein UreE, found in Shewanella halifaxensis (strain HAW-EB4).